Here is a 188-residue protein sequence, read N- to C-terminus: Peptidyl-prolyl cis-trans isomerase H (188 aa).

A2 is subject to N-acetylalanine. Positions 14-176 (FFDVSIGGQE…WTHSLTCPAL (163 aa)) constitute a PPIase cyclophilin-type domain.

It belongs to the cyclophilin-type PPIase family. PPIase H subfamily. As to quaternary structure, interacts directly with PRPF4. Part of a heteromeric complex containing PPIH, PRPF3 and PRPF4 that is stable in the absence of RNA. Component of the U4/U6-U5 tri-snRNP complex composed of the U4, U6 and U5 snRNAs and at least PRPF3, PRPF4, PRPF6, PRPF8, PRPF31, SNRNP200, TXNL4A, SNRNP40, DDX23, CD2BP2, PPIH, SNU13, EFTUD2, SART1 and USP39. Heterodimer with PRPF18. Heterodimer with PRPF18.

Its subcellular location is the nucleus speckle. The protein resides in the cytoplasm. The enzyme catalyses [protein]-peptidylproline (omega=180) = [protein]-peptidylproline (omega=0). Inhibited by cyclosporin A. Its function is as follows. PPIase that catalyzes the cis-trans isomerization of proline imidic peptide bonds in oligopeptides and may therefore assist protein folding. Participates in pre-mRNA splicing. May play a role in the assembly of the U4/U5/U6 tri-snRNP complex, one of the building blocks of the spliceosome. May act as a chaperone. The sequence is that of Peptidyl-prolyl cis-trans isomerase H (Ppih) from Mus musculus (Mouse).